We begin with the raw amino-acid sequence, 274 residues long: Actin-binding protein Smlt3054 (274 aa).

ANK repeat units follow at residues 192–221 (SGNT…DVAA) and 225–254 (HGWA…NPEQ). The interval 251–274 (NPEQPGWRGRTPTRMHRHEQTQAL) is disordered.

As to quaternary structure, exists as a dimer as well as a higher order oligomer.

Its subcellular location is the secreted. The protein resides in the periplasm. Directly binds F-actin, which results in thickened and distorted F-actin fibers, and affects cellular F-actin localization. Thus, may be a host effector whose function is to disrupt host actin cytoskeletal structure, which may enhance invasion. This is Actin-binding protein Smlt3054 from Stenotrophomonas maltophilia (strain K279a).